The primary structure comprises 123 residues: Ribosome-binding factor A (123 aa).

Belongs to the RbfA family. As to quaternary structure, monomer. Binds 30S ribosomal subunits, but not 50S ribosomal subunits or 70S ribosomes.

It localises to the cytoplasm. Its function is as follows. One of several proteins that assist in the late maturation steps of the functional core of the 30S ribosomal subunit. Associates with free 30S ribosomal subunits (but not with 30S subunits that are part of 70S ribosomes or polysomes). Required for efficient processing of 16S rRNA. May interact with the 5'-terminal helix region of 16S rRNA. The protein is Ribosome-binding factor A of Neisseria meningitidis serogroup A / serotype 4A (strain DSM 15465 / Z2491).